The chain runs to 524 residues: Glutamyl-tRNA(Gln) amidotransferase subunit A (524 aa).

Active-site charge relay system residues include K109 and S184. S208 acts as the Acyl-ester intermediate in catalysis.

Belongs to the amidase family. GatA subfamily. Heterotrimer of A, B and C subunits.

The enzyme catalyses L-glutamyl-tRNA(Gln) + L-glutamine + ATP + H2O = L-glutaminyl-tRNA(Gln) + L-glutamate + ADP + phosphate + H(+). In terms of biological role, allows the formation of correctly charged Gln-tRNA(Gln) through the transamidation of misacylated Glu-tRNA(Gln) in organisms which lack glutaminyl-tRNA synthetase. The reaction takes place in the presence of glutamine and ATP through an activated gamma-phospho-Glu-tRNA(Gln). This Tropheryma whipplei (strain TW08/27) (Whipple's bacillus) protein is Glutamyl-tRNA(Gln) amidotransferase subunit A.